The primary structure comprises 312 residues: Aspartate carbamoyltransferase catalytic subunit (312 aa).

Residues Arg-57 and Thr-58 each coordinate carbamoyl phosphate. Lys-85 contributes to the L-aspartate binding site. Positions 107, 135, and 138 each coordinate carbamoyl phosphate. The L-aspartate site is built by Arg-168 and Arg-222. Residues Gly-264 and Pro-265 each coordinate carbamoyl phosphate.

It belongs to the aspartate/ornithine carbamoyltransferase superfamily. ATCase family. In terms of assembly, heterododecamer (2C3:3R2) of six catalytic PyrB chains organized as two trimers (C3), and six regulatory PyrI chains organized as three dimers (R2).

The catalysed reaction is carbamoyl phosphate + L-aspartate = N-carbamoyl-L-aspartate + phosphate + H(+). Its pathway is pyrimidine metabolism; UMP biosynthesis via de novo pathway; (S)-dihydroorotate from bicarbonate: step 2/3. In terms of biological role, catalyzes the condensation of carbamoyl phosphate and aspartate to form carbamoyl aspartate and inorganic phosphate, the committed step in the de novo pyrimidine nucleotide biosynthesis pathway. This chain is Aspartate carbamoyltransferase catalytic subunit, found in Carboxydothermus hydrogenoformans (strain ATCC BAA-161 / DSM 6008 / Z-2901).